We begin with the raw amino-acid sequence, 686 residues long: AsmA family protein YhjG (686 aa).

Over 1 to 6 the chain is Cytoplasmic; the sequence is MSKAGK. A helical membrane pass occupies residues 7-27; sequence ITAAISGAFLLLIVVAIILIA. Over 28–686 the chain is Periplasmic; it reads TFDWNRLKPT…CRTILSQMKK (659 aa). The segment at 372-396 is disordered; it reads VDSGKGAEKSKRSEQKKGEKSVQPA. Over residues 376 to 391 the composition is skewed to basic and acidic residues; that stretch reads KGAEKSKRSEQKKGEK.

Belongs to the AsmA family.

The protein resides in the cell inner membrane. The chain is AsmA family protein YhjG (yhjG) from Escherichia coli (strain K12).